A 368-amino-acid chain; its full sequence is MSNAPILLTPGPLTTSLRTRQAMLVDWGSWDRDFNQLTASVCEQLLAIIDGSASHHCVPLQGSGTFAVEAAIGTLVPRDGKVLVLINGAYGQRLAKICKVLGRNFSTFETAEDQPTTAADVDRLLAADPSVTHVALIHCETSTGILNPLHEIAQVIKRHGKRLIIDAMSSFGALPIDAREIPFEALIAASGKCLEGVPGMGFVFAEKTALAAAEGNAHSLAMDLHDQHAYMAKTGQWRFTPPTHVIAALHEALLQYAEEGGLPARHQRYADNCKTLLDGMAAIGLRSFLPADIQAPIIVTFHAPNDARYQFKDFYERVKAKGFILYPGKLTQVETFRVGCIGVVGPDGMQAAVNAVADVLREMEVLDI.

An N6-(pyridoxal phosphate)lysine modification is found at Lys192.

Belongs to the class-V pyridoxal-phosphate-dependent aminotransferase family. PhnW subfamily. In terms of assembly, homodimer. Requires pyridoxal 5'-phosphate as cofactor.

The catalysed reaction is (2-aminoethyl)phosphonate + pyruvate = phosphonoacetaldehyde + L-alanine. Involved in phosphonate degradation. In Pseudomonas putida (strain W619), this protein is 2-aminoethylphosphonate--pyruvate transaminase.